The primary structure comprises 91 residues: Elongation factor 1-beta (91 aa).

The protein belongs to the EF-1-beta/EF-1-delta family.

Promotes the exchange of GDP for GTP in EF-1-alpha/GDP, thus allowing the regeneration of EF-1-alpha/GTP that could then be used to form the ternary complex EF-1-alpha/GTP/AAtRNA. The chain is Elongation factor 1-beta (ef1b) from Pyrococcus abyssi (strain GE5 / Orsay).